The sequence spans 645 residues: Homeobox protein B-H2 (645 aa).

Disordered stretches follow at residues 1-50, 86-134, 149-176, 240-259, 265-385, and 553-645; these read MTTM…TTAT, SSGG…QAAL, RERE…AHHP, SHLS…HDER, MLQQ…KART, and GAQQ…ALEV. Residues 18–29 are compositionally biased toward low complexity; it reads SAPSATAHHPAA. The segment covering 106–121 has biased composition (basic residues); sequence QHHHHHQQQQQHHHHQ. Positions 122–134 are enriched in low complexity; sequence QQQQQQQHQQAAL. Positions 149-165 are enriched in basic and acidic residues; sequence REREREREREHYRERHS. Positions 244–253 are enriched in basic residues; it reads HQQHHPHLHH. Residues 275-316 show a composition bias toward low complexity; sequence NNNNNNNNSSSASNNNNNNNNSASANSNIISGNSSSSNNNNG. The span at 317 to 328 shows a compositional bias: gly residues; it reads SGNGNMLLGGPG. A compositionally biased stretch (polar residues) spans 329-339; the sequence is SSISGDQASTI. A compositionally biased stretch (low complexity) spans 362-377; it reads SSANGDSSSHLSLSLS. Residues 380-439 constitute a DNA-binding region (homeobox); that stretch reads QRKARTAFTDHQLQTLEKSFERQKYLSVQDRMELANKLELSDCQVKTWYQNRRTKWKRQT. The span at 553 to 574 shows a compositional bias: low complexity; it reads GAQQQQQQPPAASRSPATSQSA. Over residues 583–592 the composition is skewed to polar residues; sequence TSSSSRQRLI. T593 carries the phosphothreonine modification. Residues 594–603 are compositionally biased toward pro residues; it reads PSPPLNPGSP. Phosphoserine is present on residues S595 and S602. Residues 618-632 show a composition bias toward basic and acidic residues; the sequence is DEERDIERERERERE. Residues 633 to 645 show a composition bias toward acidic residues; it reads RDEDDEEELALEV.

It belongs to the Antp homeobox family. B-H1 and B-H2 are abundant in the eye-antenna imaginal disk. Expressed in R1 and R6 cells throughout larval stage until 30 hours after puparium formation, at which time expression is seen in the anterior and posterior primary pigment cells. Coexpressed in embryonic glial cells, neurons of the CNS and PNS, most latitudinal anterior cells of the developing notum and the central circular region of the leg and antennal imaginal disk throughout larval development.

It is found in the nucleus. Its function is as follows. B-H1 and B-H2 are regulated by members of the wg signaling pathway; wg and dpp. B-H1 and B-H2 are coexpressed and functionally required in R1 and R6 receptor cells and primary pigment cells for normal eye development. Coexpression is also required for the fate determination of external sensory organs, formation of notal microchaetae, formation of presutural macrochaetae, antennal development and for distal leg morphogenesis; segmentation and specification of tarsal segments 3-5. This is Homeobox protein B-H2 (B-H2) from Drosophila melanogaster (Fruit fly).